We begin with the raw amino-acid sequence, 233 residues long: UPF0128 protein MJ1463 (233 aa).

This sequence belongs to the UPF0128 family.

This is UPF0128 protein MJ1463 from Methanocaldococcus jannaschii (strain ATCC 43067 / DSM 2661 / JAL-1 / JCM 10045 / NBRC 100440) (Methanococcus jannaschii).